We begin with the raw amino-acid sequence, 560 residues long: Oxygen-dependent choline dehydrogenase (560 aa).

6-35 (DYIIIGGGSAGSVLGGRLSEDVSNNVLVLE) is a binding site for FAD. Catalysis depends on H472, which acts as the Proton acceptor.

It belongs to the GMC oxidoreductase family. It depends on FAD as a cofactor.

The catalysed reaction is choline + A = betaine aldehyde + AH2. The enzyme catalyses betaine aldehyde + NAD(+) + H2O = glycine betaine + NADH + 2 H(+). It functions in the pathway amine and polyamine biosynthesis; betaine biosynthesis via choline pathway; betaine aldehyde from choline (cytochrome c reductase route): step 1/1. Functionally, involved in the biosynthesis of the osmoprotectant glycine betaine. Catalyzes the oxidation of choline to betaine aldehyde and betaine aldehyde to glycine betaine at the same rate. This Staphylococcus xylosus protein is Oxygen-dependent choline dehydrogenase.